The chain runs to 339 residues: MHVLDGSSGGGQLVRTALTCAAVSGESFRMRYVRRARSNPGLQAQHCAAVNAVADICDAATDGVEVGSEAFSFEPEVAAEEADDDEEPTLGGTTSVEVGTAGSIPLVFDSLLPLAGALDEPITATLTGGTDAKWAPPMDYFQHVKLPLLREHGIDATVSVDRRGFYPRGGGEATLTVEPSTPTPITLTERGDREALTAYSVAESSLADDEVAEQQATAAAPDAAHEIAYTDADSAGSAVVLAAEYEHSRAGFAALGERGVSADAVGENAADALAAFESGPGAVDSHLADQLVPVVAVAGGEVRAPEVTTHIETCVDLLAEFDYDIDIEHTDDGAVVLSA.

ATP-binding positions include aspartate 109 and 286–290 (HLADQ). The active-site Tele-AMP-histidine intermediate is the histidine 310.

It belongs to the RNA 3'-terminal cyclase family. Type 1 subfamily.

The protein resides in the cytoplasm. The enzyme catalyses a 3'-end 3'-phospho-ribonucleotide-RNA + ATP = a 3'-end 2',3'-cyclophospho-ribonucleotide-RNA + AMP + diphosphate. Its function is as follows. Catalyzes the conversion of 3'-phosphate to a 2',3'-cyclic phosphodiester at the end of RNA. The mechanism of action of the enzyme occurs in 3 steps: (A) adenylation of the enzyme by ATP; (B) transfer of adenylate to an RNA-N3'P to produce RNA-N3'PP5'A; (C) and attack of the adjacent 2'-hydroxyl on the 3'-phosphorus in the diester linkage to produce the cyclic end product. The biological role of this enzyme is unknown but it is likely to function in some aspects of cellular RNA processing. The chain is RNA 3'-terminal phosphate cyclase from Halobacterium salinarum (strain ATCC 29341 / DSM 671 / R1).